We begin with the raw amino-acid sequence, 644 residues long: 2-isopropylmalate synthase (644 aa).

The interval 1–40 (MTTSESPDAYTESFGAHTIVKPAGPPRVGQPSWNPQRASS) is disordered. Polar residues predominate over residues 31–40 (PSWNPQRASS). Residues 72–346 (PLWCAVDLRD…DPQIDFSNID (275 aa)) form the Pyruvate carboxyltransferase domain. Residues D81, H285, H287, and N321 each contribute to the Mg(2+) site. The segment at 491–644 (PVRPLERIRQ…VVSAVNRAAR (154 aa)) is regulatory domain. Residues 575-593 (VTIASPAQPGEAGRHASDP) form a VNTR1 repeat. The disordered stretch occupies residues 581–612 (AQPGEAGRHASDPVTIASPAQPGEAGRHASDP). One copy of the VNTR2 repeat lies at 594 to 612 (VTIASPAQPGEAGRHASDP).

It belongs to the alpha-IPM synthase/homocitrate synthase family. LeuA type 2 subfamily. Homodimer. Requires Mg(2+) as cofactor.

The protein localises to the cytoplasm. It carries out the reaction 3-methyl-2-oxobutanoate + acetyl-CoA + H2O = (2S)-2-isopropylmalate + CoA + H(+). It functions in the pathway amino-acid biosynthesis; L-leucine biosynthesis; L-leucine from 3-methyl-2-oxobutanoate: step 1/4. Catalyzes the condensation of the acetyl group of acetyl-CoA with 3-methyl-2-oxobutanoate (2-ketoisovalerate) to form 3-carboxy-3-hydroxy-4-methylpentanoate (2-isopropylmalate). The sequence is that of 2-isopropylmalate synthase from Mycobacterium tuberculosis (strain CDC 1551 / Oshkosh).